The following is a 262-amino-acid chain: Acetylglutamate kinase (262 aa).

Substrate contacts are provided by residues 46-47, Arg68, and Asn160; that span reads GG.

This sequence belongs to the acetylglutamate kinase family. ArgB subfamily.

It localises to the cytoplasm. The enzyme catalyses N-acetyl-L-glutamate + ATP = N-acetyl-L-glutamyl 5-phosphate + ADP. Its pathway is amino-acid biosynthesis; L-arginine biosynthesis; N(2)-acetyl-L-ornithine from L-glutamate: step 2/4. Functionally, catalyzes the ATP-dependent phosphorylation of N-acetyl-L-glutamate. The sequence is that of Acetylglutamate kinase from Shewanella amazonensis (strain ATCC BAA-1098 / SB2B).